A 127-amino-acid polypeptide reads, in one-letter code: Fluoride-specific ion channel FluC (127 aa).

Transmembrane regions (helical) follow at residues 4-24 (FSIL…RYLV), 38-58 (YGTL…IAAF), 71-91 (VIGL…MDNV), and 104-124 (LNIL…FQLL). Residues glycine 78 and threonine 81 each coordinate Na(+).

This sequence belongs to the fluoride channel Fluc/FEX (TC 1.A.43) family.

Its subcellular location is the cell inner membrane. It catalyses the reaction fluoride(in) = fluoride(out). Its activity is regulated as follows. Na(+) is not transported, but it plays an essential structural role and its presence is essential for fluoride channel function. Its function is as follows. Fluoride-specific ion channel. Important for reducing fluoride concentration in the cell, thus reducing its toxicity. The polypeptide is Fluoride-specific ion channel FluC (Vibrio parahaemolyticus serotype O3:K6 (strain RIMD 2210633)).